Here is a 375-residue protein sequence, read N- to C-terminus: MQVIVALAALSSLAAPALGFSIPRGVPVSQSMIDVKLSAAGNSMVKATITNNGDRALNLLKFHTIMDSNPTRKVTIESQDGKEVQFTGMMPRYKHTDLKPTYFISLPPKGTVEHSFDIASTHDLSRGGKFTLKAEGMVPLAEENGTTITGAAKYNSNELHMDIDGNKAASVERAMGIVKRSGPLTRIGKRTSIDMQSCSNRQELQALTAALRASAQLSSMAAQAVQQNQEKYMEYFKDPQYAQTVQSRFQSVAQESSSTSGGGTTYHCTDLMNGCEQGVLAYTLPSQNEVFNCPIYYSDLPPLSNECHAQDQATTTLHELTHNPAVQEPFCEDNGYGYERATALSAEKAVQNADSYALFANGKFLPMSSMLVTQD.

Residues 1–19 form the signal peptide; that stretch reads MQVIVALAALSSLAAPALG. The propeptide occupies 20–190; sequence FSIPRGVPVS…SGPLTRIGKR (171 aa). Intrachain disulfides connect cysteine 198/cysteine 268 and cysteine 275/cysteine 293. Histidine 318 is a binding site for Zn(2+). The active site involves glutamate 319. Histidine 322 and aspartate 333 together coordinate Zn(2+).

Belongs to the peptidase M35 family. Zn(2+) is required as a cofactor.

The protein localises to the secreted. The catalysed reaction is Preferential cleavage of bonds with hydrophobic residues in P1'. Also 3-Asn-|-Gln-4 and 8-Gly-|-Ser-9 bonds in insulin B chain.. Secreted metalloproteinase that allows assimilation of proteinaceous substrates. Shows high activities on basic nuclear substrates such as histone and protamine. May be involved in virulence. This Arthroderma gypseum (strain ATCC MYA-4604 / CBS 118893) (Microsporum gypseum) protein is Neutral protease 2 homolog MGYG_00813.